Here is a 1588-residue protein sequence, read N- to C-terminus: Ubiquitin carboxyl-terminal hydrolase 54 (1588 aa).

The residue at position 12 (arginine 12) is an Omega-N-methylarginine. Residues 31-352 form the USP domain; that stretch reads KGLSNEPGQN…QPLLLLYADP (322 aa). Residue cysteine 42 is the Nucleophile of the active site. The Zn(2+) site is built by histidine 67, cysteine 69, cysteine 74, cysteine 77, histidine 133, cysteine 145, cysteine 150, histidine 153, cysteine 166, cysteine 169, cysteine 225, and cysteine 229. Histidine 302 functions as the Proton acceptor in the catalytic mechanism. 2 stretches are compositionally biased toward basic and acidic residues: residues 382–391 and 424–434; these read GHLTDSECNQ and SEGETLKEKQA. 3 disordered regions span residues 382-519, 555-577, and 601-624; these read GHLT…PTWR, FTPDEVSKPTANDIKDGGSRSQH, and ESGYESSERNSSSPVSLDAAPPDS. The residue at position 424 (serine 424) is a Phosphoserine. The span at 453–471 shows a compositional bias: polar residues; the sequence is TVSNMIHSRPSLASQTSAG. The segment covering 499–513 has biased composition (low complexity); sequence TESTSSEAKSSSSSK. A compositionally biased stretch (basic and acidic residues) spans 555-572; sequence FTPDEVSKPTANDIKDGG. Over residues 601 to 616 the composition is skewed to low complexity; sequence ESGYESSERNSSSPVS. 2 positions are modified to phosphoserine: serine 613 and serine 616. A coiled-coil region spans residues 682-712; that stretch reads ELDELQEEVVRRAQEQELRKKREKELEAAKG. Disordered stretches follow at residues 801–834, 1089–1182, 1221–1242, and 1491–1561; these read RSLQDRMQQQASSQQPVQPSASLPSQGGALPQPT, QNTS…PDMY, SQVKPSAPGPGDKSSSHDSHPR, and WGNL…RSPG. The segment covering 808–826 has biased composition (low complexity); sequence QQQASSQQPVQPSASLPSQ. Over residues 1126–1147 the composition is skewed to basic and acidic residues; the sequence is GREHCRWVKQPRSPDGRERPPC. A Phosphoserine modification is found at serine 1138. Over residues 1510-1524 the composition is skewed to polar residues; that stretch reads PSSNLHVPLRSTWNS. Over residues 1536-1547 the composition is skewed to basic and acidic residues; it reads RRIDMPPDDDWR.

It belongs to the peptidase C19 family.

It carries out the reaction Thiol-dependent hydrolysis of ester, thioester, amide, peptide and isopeptide bonds formed by the C-terminal Gly of ubiquitin (a 76-residue protein attached to proteins as an intracellular targeting signal).. In terms of biological role, deubiquitinase that specifically mediates 'Lys-63'-linked deubiquitination of substrates with a polyubiquitin chain composed of at least 3 ubiquitins. Specifically recognizes ubiquitin chain in position S2 and catalyzes cleavage of polyubiquitin within 'Lys-63'-linked chains. Not able to deubiquitinate substrates with shorter ubiquitin chains. Mediates deubiquitination of PLK4, maintaining PLK4 stability by reducing its ubiquitination-mediated degradation. This is Ubiquitin carboxyl-terminal hydrolase 54 (Usp54) from Mus musculus (Mouse).